The primary structure comprises 275 residues: Voltage-dependent calcium channel gamma-5 subunit (275 aa).

The next 4 helical transmembrane spans lie at 8-28, 103-123, 129-149, and 181-201; these read ALTLLSSVFAVCGLGLLGIAV, FPLVSLFFMFIGFILSNIGHI, ILAFVSGIFFILSGLSLVVGL, and FAAISFLLTESAGVMSVYLFM.

This sequence belongs to the PMP-22/EMP/MP20 family. CACNG subfamily. As to quaternary structure, the L-type calcium channel is composed of five subunits: alpha-1, alpha-2/delta, beta and gamma. Acts as an auxiliary subunit for AMPA-selective glutamate receptors (AMPARs). Found in a complex with GRIA1, GRIA2, GRIA3, GRIA4, CNIH2, CNIH3, CACNG2, CACNG3, CACNG4, CACNG7 and CACNG8. Interacts with GRIA1, GRIA2, GRIA3 and GRIA4.

It is found in the membrane. It localises to the postsynaptic density membrane. In terms of biological role, regulates the gating properties of AMPA-selective glutamate receptors (AMPARs). Modulates their gating properties by accelerating their rates of activation, deactivation and desensitization. Displays subunit-specific AMPA receptor regulation. Shows specificity for GRIA1, GRIA4 and the long isoform of GRIA2. According to PubMed:18817736, shows only specificity for GRIA2 and specifically to the form of GRIA2 for which a single amino acid in the pore region has been edited from a glutamine to an arginine residue. Thought to stabilize the calcium channel in an inactivated (closed) state. This is Voltage-dependent calcium channel gamma-5 subunit (Cacng5) from Rattus norvegicus (Rat).